Reading from the N-terminus, the 506-residue chain is 2-isopropylmalate synthase (506 aa).

In terms of domain architecture, Pyruvate carboxyltransferase spans 4 to 266; it reads ILFMDTTLRD…EPSMTLKEIK (263 aa). Mn(2+) is bound by residues Asp13, His201, His203, and Asn237. The regulatory domain stretch occupies residues 390–506; it reads NITQLQVHFV…KLKSFIQLVK (117 aa).

This sequence belongs to the alpha-IPM synthase/homocitrate synthase family. LeuA type 1 subfamily. As to quaternary structure, homodimer. Requires Mn(2+) as cofactor.

The protein resides in the cytoplasm. The enzyme catalyses 3-methyl-2-oxobutanoate + acetyl-CoA + H2O = (2S)-2-isopropylmalate + CoA + H(+). Its pathway is amino-acid biosynthesis; L-leucine biosynthesis; L-leucine from 3-methyl-2-oxobutanoate: step 1/4. Functionally, catalyzes the condensation of the acetyl group of acetyl-CoA with 3-methyl-2-oxobutanoate (2-ketoisovalerate) to form 3-carboxy-3-hydroxy-4-methylpentanoate (2-isopropylmalate). The polypeptide is 2-isopropylmalate synthase (Bacillus thuringiensis (strain Al Hakam)).